The chain runs to 216 residues: Cytidylate kinase (216 aa).

7–15 (GPSGTGKST) contacts ATP.

It belongs to the cytidylate kinase family. Type 1 subfamily.

Its subcellular location is the cytoplasm. It catalyses the reaction CMP + ATP = CDP + ADP. The catalysed reaction is dCMP + ATP = dCDP + ADP. The sequence is that of Cytidylate kinase from Chlamydia pneumoniae (Chlamydophila pneumoniae).